The chain runs to 144 residues: Alpha-crystallin (144 aa).

Residues 33–143 form the sHSP domain; sequence PTFDTRLMRL…TEKHIQIRST (111 aa).

Belongs to the small heat shock protein (HSP20) family.

The protein localises to the secreted. The protein resides in the cell wall. It is found in the cytoplasm. Its function is as follows. Acts as a chaperone. This is Alpha-crystallin (hspX) from Mycobacterium bovis (strain ATCC BAA-935 / AF2122/97).